The sequence spans 305 residues: Tyrosine recombinase XerC (305 aa).

The Core-binding (CB) domain occupies 4 to 95 (TQIQELIIKW…AIKNFYKFLE (92 aa)). Residues 116–298 (LLPKALSEEE…SIKHLETAYV (183 aa)) form the Tyr recombinase domain. Active-site residues include Arg-159, Lys-182, His-250, Arg-253, and His-276. The O-(3'-phospho-DNA)-tyrosine intermediate role is filled by Tyr-285.

Belongs to the 'phage' integrase family. XerC subfamily. As to quaternary structure, forms a cyclic heterotetrameric complex composed of two molecules of XerC and two molecules of XerD.

It is found in the cytoplasm. Its function is as follows. Site-specific tyrosine recombinase, which acts by catalyzing the cutting and rejoining of the recombining DNA molecules. The XerC-XerD complex is essential to convert dimers of the bacterial chromosome into monomers to permit their segregation at cell division. It also contributes to the segregational stability of plasmids. The protein is Tyrosine recombinase XerC of Rickettsia bellii (strain OSU 85-389).